We begin with the raw amino-acid sequence, 485 residues long: MVRLGPKKPPARKGSMADVPANLMEQIHGLETLFTVSSEKMRSIVKHFISELDKGLSKKGGNIPMIPGWVVEYPTGKETGDFLALDLGGTNLRVVLVKLGGNHDFDTTQNKYRLPDHLRTGTSEQLWSFIAKCLKEFVDEWYPDGVSEPLPLGFTFSYPASQKKINSGVLQRWTKGFDIEGVEGHDVVPMLQEQIEKLNIPINVVALINDTTGTLVASLYTDPQTKMGIIIGTGVNGAYYDVVSGIEKLEGLLPEDIGPDSPMAINCEYGSFDNEHLVLPRTKYDVIIDEESPRPGQQAFEKMTSGYYLGEIMRLVLLDLYDSGFIFKDQDISKLKEAYVMDTSYPSKIEDDPFENLEDTDDLFKTNLNIETTVVERKLIRKLAELVGTRAARLTVCGVSAICDKRGYKTAHIAADGSVFNRYPGYKEKAAQALKDIYNWDVEKMEDHPIQLVAAEDGSGVGAAIIACLTQKRLAAGKSVGIKGE.

Phosphoserine is present on S15. In terms of domain architecture, Hexokinase spans A21–C468. The hexokinase small subdomain stretch occupies residues T75–I208. ATP is bound at residue K111. Positions P151–F177 are glucose-binding. The hexokinase large subdomain stretch occupies residues N209–D457.

As to quaternary structure, monomer and homodimer. The monomeric form is active, the homodimeric form inactive.

The enzyme catalyses a D-hexose + ATP = a D-hexose 6-phosphate + ADP + H(+). The catalysed reaction is D-fructose + ATP = D-fructose 6-phosphate + ADP + H(+). It carries out the reaction D-glucose + ATP = D-glucose 6-phosphate + ADP + H(+). The protein operates within carbohydrate metabolism; hexose metabolism. It participates in carbohydrate degradation; glycolysis; D-glyceraldehyde 3-phosphate and glycerone phosphate from D-glucose: step 1/4. Catalyzes the phosphorylation of hexose, such as D-glucose and D-fructose, to hexose 6-phosphate (D-glucose 6-phosphate and D-fructose 6-phosphate, respectively). Has higher affinity for D-glucose. Mediates the initial step of glycolysis by catalyzing phosphorylation of D-glucose to D-glucose 6-phosphate. This chain is Hexokinase (RAG5), found in Kluyveromyces lactis (strain ATCC 8585 / CBS 2359 / DSM 70799 / NBRC 1267 / NRRL Y-1140 / WM37) (Yeast).